The following is a 20-amino-acid chain: SIFAFQDESPSAIAQAKLFK.

Belongs to the BetVI family.

This chain is Protein PR-L5, found in Lupinus luteus (European yellow lupine).